A 398-amino-acid polypeptide reads, in one-letter code: Inositol polyphosphate 5-phosphatase (398 aa).

This sequence belongs to the inositol 1,4,5-trisphosphate 5-phosphatase type II family. Expressed in tail, cilia, dendrites, axon and male head.

The protein localises to the cytoplasm. Functionally, dephosphorylates a number of phosphatidylinositols. Controls the cellular levels and subcellular distribution of phosphatidylinositol 3,5-bisphosphate and phosphatidylinositol 3,4,5-trisphosphate. Has a role in sperm activation and motility. Influences the localization of the transient receptor potential polycystin (TRPP) complex proteins lov-1 and pkd-2. The sequence is that of Inositol polyphosphate 5-phosphatase from Caenorhabditis elegans.